The sequence spans 293 residues: Aromatic amino acid exporter YddG (293 aa).

The Cytoplasmic portion of the chain corresponds to 1-6; the sequence is MTSQKA. The helical transmembrane segment at 7-27 threads the bilayer; sequence TLIGLVAIVLWSTMVGLIRGV. The region spanning 15–137 is the EamA 1 domain; it reads VLWSTMVGLI…IALTGVCWVL (123 aa). Over 28–33 the chain is Periplasmic; it reads SEGLGP. The helical transmembrane segment at 34–54 threads the bilayer; sequence VGGAAMIYSLSGLLLIFTVGL. The Cytoplasmic portion of the chain corresponds to 55–63; the sequence is PDIRRFPGR. Residues 64-84 traverse the membrane as a helical segment; sequence YLIAGSVLFVSYEICLALSLG. The Periplasmic portion of the chain corresponds to 85–92; it reads YAATRHQA. A helical transmembrane segment spans residues 93–113; it reads IEVGMVNYLWPSLTILFAILF. The Cytoplasmic segment spans residues 114–119; the sequence is NGQKTN. The helical transmembrane segment at 120-140 threads the bilayer; the sequence is WLIVPGLLIALTGVCWVLGGE. The Periplasmic portion of the chain corresponds to 141 to 147; the sequence is NGLNPGE. A helical transmembrane segment spans residues 148–168; that stretch reads IISNVATSPLSYLLAFLGAFI. An EamA 2 domain is found at 167–285; the sequence is FIWATYCTVT…AVMVCVGSLL (119 aa). Residues 169 to 182 lie on the Cytoplasmic side of the membrane; sequence WATYCTVTNKYARG. A helical membrane pass occupies residues 183-203; it reads FNGITVFVLLTAVALWLHYFL. The Periplasmic portion of the chain corresponds to 204–207; that stretch reads TPQP. The chain crosses the membrane as a helical span at residues 208–228; the sequence is AMIFSLPVIAKLFTAALTLGF. At 229–243 the chain is on the cytoplasmic side; that stretch reads AYAAWNVGILHGNVT. Residues 244–264 form a helical membrane-spanning segment; it reads IMAVGSYFTPVMSSALAALLL. Residues 265 to 267 are Periplasmic-facing; it reads SSP. The helical transmembrane segment at 268 to 288 threads the bilayer; the sequence is LSFSFWQGAVMVCVGSLLCWL. The Cytoplasmic segment spans residues 289–293; it reads ATRRR.

The protein belongs to the drug/metabolite transporter (DMT) superfamily. Aromatic amino acid/paraquat exporter (ArAA/P-E) (TC 2.A.7.17) family.

It localises to the cell inner membrane. Functionally, amino acid transporter with broad substrate specificity. Required for resistance to methyl viologen. May function with OmpD porin. This Salmonella typhimurium (strain 14028s / SGSC 2262) protein is Aromatic amino acid exporter YddG (yddG).